The sequence spans 328 residues: uncharacterized protein (328 aa).

This is an uncharacterized protein from Schizosaccharomyces pombe (strain 972 / ATCC 24843) (Fission yeast).